We begin with the raw amino-acid sequence, 115 residues long: Large ribosomal subunit protein uL22 (115 aa).

It belongs to the universal ribosomal protein uL22 family. Part of the 50S ribosomal subunit.

Functionally, this protein binds specifically to 23S rRNA; its binding is stimulated by other ribosomal proteins, e.g. L4, L17, and L20. It is important during the early stages of 50S assembly. It makes multiple contacts with different domains of the 23S rRNA in the assembled 50S subunit and ribosome. The globular domain of the protein is located near the polypeptide exit tunnel on the outside of the subunit, while an extended beta-hairpin is found that lines the wall of the exit tunnel in the center of the 70S ribosome. The chain is Large ribosomal subunit protein uL22 from Limosilactobacillus fermentum (strain NBRC 3956 / LMG 18251) (Lactobacillus fermentum).